A 275-amino-acid polypeptide reads, in one-letter code: Methylthioribulose-1-phosphate dehydratase (275 aa).

Cys-125 contacts substrate. 2 residues coordinate Zn(2+): His-143 and His-145. Glu-168 acts as the Proton donor/acceptor in catalysis. His-233 is a binding site for Zn(2+).

This sequence belongs to the aldolase class II family. MtnB subfamily. Requires Zn(2+) as cofactor.

The protein localises to the cytoplasm. The enzyme catalyses 5-(methylsulfanyl)-D-ribulose 1-phosphate = 5-methylsulfanyl-2,3-dioxopentyl phosphate + H2O. The protein operates within amino-acid biosynthesis; L-methionine biosynthesis via salvage pathway; L-methionine from S-methyl-5-thio-alpha-D-ribose 1-phosphate: step 2/6. Catalyzes the dehydration of methylthioribulose-1-phosphate (MTRu-1-P) into 2,3-diketo-5-methylthiopentyl-1-phosphate (DK-MTP-1-P). This Lodderomyces elongisporus (strain ATCC 11503 / CBS 2605 / JCM 1781 / NBRC 1676 / NRRL YB-4239) (Yeast) protein is Methylthioribulose-1-phosphate dehydratase.